Here is a 459-residue protein sequence, read N- to C-terminus: Exodeoxyribonuclease 7 large subunit (459 aa).

The protein belongs to the XseA family. In terms of assembly, heterooligomer composed of large and small subunits.

The protein localises to the cytoplasm. It carries out the reaction Exonucleolytic cleavage in either 5'- to 3'- or 3'- to 5'-direction to yield nucleoside 5'-phosphates.. Bidirectionally degrades single-stranded DNA into large acid-insoluble oligonucleotides, which are then degraded further into small acid-soluble oligonucleotides. This Pseudomonas fluorescens (strain ATCC BAA-477 / NRRL B-23932 / Pf-5) protein is Exodeoxyribonuclease 7 large subunit.